The following is a 555-amino-acid chain: CTL-like protein DDB_G0274487 (555 aa).

A compositionally biased stretch (polar residues) spans 1 to 17 (MGIEDNSQQPNTGSPYG). The interval 1–101 (MGIEDNSQQP…NLNKANDRES (101 aa)) is disordered. A compositionally biased stretch (low complexity) spans 19 to 63 (SPPSQYNPYGQQPPQQQQYNPYGEQQQQPQQQQQYGYQPQFQPTY). The span at 79–90 (PFPPQQQQPPPI) shows a compositional bias: pro residues. N-linked (GlcNAc...) asparagine glycosylation occurs at Asn116. Residues 138-158 (IWFSILFGLNFGLLIVVSASA) form a helical membrane-spanning segment. Asn174 carries an N-linked (GlcNAc...) asparagine glycan. 10 helical membrane passes run 182–202 (FLFA…WAWL), 210–230 (ESLI…YCVF), 231–251 (FFVW…FFII), 284–304 (AGYV…SAFA), 313–333 (AIQT…FHVI), 340–360 (TVSG…VGMP), 372–392 (LTTS…IETL), 405–425 (VVVK…SSIV), 472–492 (IAIG…LISI), and 493–513 (PFDM…LVII).

It belongs to the CTL (choline transporter-like) family.

It is found in the membrane. The protein is CTL-like protein DDB_G0274487 of Dictyostelium discoideum (Social amoeba).